The primary structure comprises 448 residues: Glutamyl-tRNA reductase (448 aa).

Substrate is bound by residues 49–52 (TCNR), S109, 114–116 (ETQ), and Q120. Residue C50 is the Nucleophile of the active site. 189 to 194 (GAGEMS) lines the NADP(+) pocket.

The protein belongs to the glutamyl-tRNA reductase family. Homodimer.

The catalysed reaction is (S)-4-amino-5-oxopentanoate + tRNA(Glu) + NADP(+) = L-glutamyl-tRNA(Glu) + NADPH + H(+). It participates in porphyrin-containing compound metabolism; protoporphyrin-IX biosynthesis; 5-aminolevulinate from L-glutamyl-tRNA(Glu): step 1/2. In terms of biological role, catalyzes the NADPH-dependent reduction of glutamyl-tRNA(Glu) to glutamate 1-semialdehyde (GSA). The sequence is that of Glutamyl-tRNA reductase from Staphylococcus aureus (strain NCTC 8325 / PS 47).